The chain runs to 353 residues: Small ribosomal subunit biogenesis GTPase RsgA (353 aa).

A disordered region spans residues 1-24 (MSKNKLSKGQQRRVKANHQRRLKT). Positions 10–23 (QQRRVKANHQRRLK) are enriched in basic residues. The region spanning 104–274 (ASVLTRPDFY…VIDSPGVREF (171 aa)) is the CP-type G domain. Residues 160–163 (NKID) and 214–222 (GQSGVGKSS) each bind GTP. Zn(2+) is bound by residues cysteine 298, cysteine 303, histidine 305, and cysteine 311.

It belongs to the TRAFAC class YlqF/YawG GTPase family. RsgA subfamily. Monomer. Associates with 30S ribosomal subunit, binds 16S rRNA. Zn(2+) serves as cofactor.

Its subcellular location is the cytoplasm. One of several proteins that assist in the late maturation steps of the functional core of the 30S ribosomal subunit. Helps release RbfA from mature subunits. May play a role in the assembly of ribosomal proteins into the subunit. Circularly permuted GTPase that catalyzes slow GTP hydrolysis, GTPase activity is stimulated by the 30S ribosomal subunit. The sequence is that of Small ribosomal subunit biogenesis GTPase RsgA from Klebsiella pneumoniae subsp. pneumoniae (strain ATCC 700721 / MGH 78578).